Consider the following 191-residue polypeptide: uncharacterized protein (191 aa).

This is an uncharacterized protein from Arabidopsis thaliana (Mouse-ear cress).